Reading from the N-terminus, the 105-residue chain is Heat shock protein HspQ (105 aa).

The segment at 84-105 (QPKLDELSASIKKQLKTPRLRN) is disordered. Basic residues predominate over residues 96 to 105 (KQLKTPRLRN).

The protein belongs to the HspQ family.

It localises to the cytoplasm. Functionally, involved in the degradation of certain denaturated proteins, including DnaA, during heat shock stress. The polypeptide is Heat shock protein HspQ (Wigglesworthia glossinidia brevipalpis).